The sequence spans 278 residues: Multidrug-efflux transporter 1 regulator (278 aa).

An HTH merR-type domain is found at 5-75 (YYSIGEVSKL…LEEMKKAQDL (71 aa)). Positions 8–27 (IGEVSKLANVSIKALRYYDK) form a DNA-binding region, H-T-H motif.

In terms of assembly, binds DNA as a homodimer.

In terms of biological role, activates transcription of the bmr gene in response to structurally dissimilar drugs. Binds rhodamine as an inducer. The protein is Multidrug-efflux transporter 1 regulator (bmrR) of Bacillus subtilis (strain 168).